The chain runs to 151 residues: Transcriptional regulator MraZ (151 aa).

SpoVT-AbrB domains are found at residues 5-52 (ANAV…PLDE) and 81-124 (AVDL…DEDA).

Belongs to the MraZ family. Forms oligomers.

Its subcellular location is the cytoplasm. The protein resides in the nucleoid. This is Transcriptional regulator MraZ from Pseudomonas putida (strain W619).